We begin with the raw amino-acid sequence, 81 residues long: Cytotoxin 4N (81 aa).

The signal sequence occupies residues 1–21; the sequence is MKTLLLTLVVVTIVCLDLGYT. Intrachain disulfides connect cysteine 24-cysteine 42, cysteine 35-cysteine 59, cysteine 63-cysteine 74, and cysteine 75-cysteine 80.

This sequence belongs to the three-finger toxin family. Short-chain subfamily. Type IA cytotoxin sub-subfamily. In terms of assembly, monomer in solution; Homodimer and oligomer in the presence of negatively charged lipids forming a pore with a size ranging between 20 and 30 Angstroms. In terms of tissue distribution, expressed by the venom gland.

The protein resides in the secreted. It is found in the target cell membrane. In terms of biological role, shows cytolytic activity on many different cells by forming pore in lipid membranes. In vivo, increases heart rate or kills the animal by cardiac arrest. In addition, it binds to heparin with high affinity, interacts with Kv channel-interacting protein 1 (KCNIP1) in a calcium-independent manner, and binds to integrin alpha-V/beta-3 (ITGAV/ITGB3) with moderate affinity. The protein is Cytotoxin 4N of Naja atra (Chinese cobra).